Here is a 484-residue protein sequence, read N- to C-terminus: Cholesterol 22-hydroxylase CYP90B27 (484 aa).

Residues 2 to 22 (ALELILVLSSLIVILIIFFSF) form a helical membrane-spanning segment. Residue C429 coordinates heme.

It belongs to the cytochrome P450 family. As to expression, expressed in roots.

It is found in the membrane. The catalysed reaction is cholesterol + reduced [NADPH--hemoprotein reductase] + O2 = (22R)-hydroxycholesterol + oxidized [NADPH--hemoprotein reductase] + H2O + H(+). The protein operates within steroid metabolism; cholesterol metabolism. In terms of biological role, involved in the biosynthesis of steroidal saponins and alkaloids natural products from cholesterol such as spirostane-type saponins and polyphyllins, compounds with pharmacological activity. Catalyzes the C-22 hydroxylation of cholesterol to form 22R-hydroxycholesterol. In Paris polyphylla (Daiswa polyphylla), this protein is Cholesterol 22-hydroxylase CYP90B27.